Here is a 118-residue protein sequence, read N- to C-terminus: MPFVELDTNLPPQQVPQDLAEKLCSATATILSKPRERVNVTVRTGVSMVVGGSCAPCTQLLVSSIGVVGTAEQNKEHSAKFFQFLTENMGLEQDRILLRFVPLEPWQVGKKATVMTFL.

N-acetylproline is present on P2.

This sequence belongs to the MIF family. Homotrimer.

The protein localises to the cytoplasm. The enzyme catalyses D-dopachrome + H(+) = 5,6-dihydroxyindole + CO2. Its function is as follows. Tautomerization of D-dopachrome with decarboxylation to give 5,6-dihydroxyindole (DHI). In Xenopus tropicalis (Western clawed frog), this protein is D-dopachrome decarboxylase (ddt).